The sequence spans 189 residues: B3 domain-containing protein At2g32645 (189 aa).

The segment at residues 33-133 is a DNA-binding region (TF-B3); that stretch reads FNQVKTPDFL…KLCFALTPKI (101 aa).

It localises to the nucleus. The sequence is that of B3 domain-containing protein At2g32645 from Arabidopsis thaliana (Mouse-ear cress).